The chain runs to 281 residues: LIM domain-containing protein G (281 aa).

LIM zinc-binding domains are found at residues 40–101, 141–205, and 206–262; these read LNCS…IKFN, DICT…SKQV, and NCFA…FTQP.

The polypeptide is LIM domain-containing protein G (limG) (Dictyostelium discoideum (Social amoeba)).